Reading from the N-terminus, the 303-residue chain is GTPase Era (303 aa).

The region spanning 8–176 is the Era-type G domain; the sequence is YCGFIAIVGR…ASIVRKHMPE (169 aa). The interval 16–23 is G1; it reads GRPNVGKS. A GTP-binding site is contributed by 16–23; it reads GRPNVGKS. The G2 stretch occupies residues 42–46; that stretch reads QTTRH. Residues 63–66 are G3; it reads DTPG. GTP-binding positions include 63 to 67 and 125 to 128; these read DTPGL and NKVD. The segment at 125-128 is G4; sequence NKVD. Positions 155–157 are G5; that stretch reads ISA. A KH type-2 domain is found at 207-284; it reads LGEELPYSVT…HLELWVKVKS (78 aa).

This sequence belongs to the TRAFAC class TrmE-Era-EngA-EngB-Septin-like GTPase superfamily. Era GTPase family. Monomer.

The protein localises to the cytoplasm. It is found in the cell inner membrane. Its function is as follows. An essential GTPase that binds both GDP and GTP, with rapid nucleotide exchange. Plays a role in 16S rRNA processing and 30S ribosomal subunit biogenesis and possibly also in cell cycle regulation and energy metabolism. This Yersinia enterocolitica serotype O:8 / biotype 1B (strain NCTC 13174 / 8081) protein is GTPase Era.